Here is a 267-residue protein sequence, read N- to C-terminus: Small ribosomal subunit protein mS23 (267 aa).

A disordered region spans residues valine 230–serine 267.

Belongs to the mitochondrion-specific ribosomal protein mS23 family. Component of the mitochondrial small ribosomal subunit.

It is found in the mitochondrion. This Meyerozyma guilliermondii (strain ATCC 6260 / CBS 566 / DSM 6381 / JCM 1539 / NBRC 10279 / NRRL Y-324) (Yeast) protein is Small ribosomal subunit protein mS23 (RSM25).